The primary structure comprises 317 residues: Sulfate adenylyltransferase subunit 2 (317 aa).

Disordered stretches follow at residues 1–21 (MPDSRPDTELSNPQSAKAPLD) and 298–317 (RAIDRDQSGSMEKKKREGYF).

This sequence belongs to the PAPS reductase family. CysD subfamily. As to quaternary structure, heterodimer composed of CysD, the smaller subunit, and CysN.

The catalysed reaction is sulfate + ATP + H(+) = adenosine 5'-phosphosulfate + diphosphate. Its pathway is sulfur metabolism; hydrogen sulfide biosynthesis; sulfite from sulfate: step 1/3. Its function is as follows. With CysN forms the ATP sulfurylase (ATPS) that catalyzes the adenylation of sulfate producing adenosine 5'-phosphosulfate (APS) and diphosphate, the first enzymatic step in sulfur assimilation pathway. APS synthesis involves the formation of a high-energy phosphoric-sulfuric acid anhydride bond driven by GTP hydrolysis by CysN coupled to ATP hydrolysis by CysD. The polypeptide is Sulfate adenylyltransferase subunit 2 (Rhizobium etli (strain ATCC 51251 / DSM 11541 / JCM 21823 / NBRC 15573 / CFN 42)).